The chain runs to 177 residues: Large ribosomal subunit protein uL6 (177 aa).

Belongs to the universal ribosomal protein uL6 family. In terms of assembly, part of the 50S ribosomal subunit.

This protein binds to the 23S rRNA, and is important in its secondary structure. It is located near the subunit interface in the base of the L7/L12 stalk, and near the tRNA binding site of the peptidyltransferase center. This is Large ribosomal subunit protein uL6 from Brucella canis (strain ATCC 23365 / NCTC 10854 / RM-666).